The primary structure comprises 213 residues: Peptide methionine sulfoxide reductase MsrA (213 aa).

The active site involves cysteine 53.

The protein belongs to the MsrA Met sulfoxide reductase family.

It catalyses the reaction L-methionyl-[protein] + [thioredoxin]-disulfide + H2O = L-methionyl-(S)-S-oxide-[protein] + [thioredoxin]-dithiol. It carries out the reaction [thioredoxin]-disulfide + L-methionine + H2O = L-methionine (S)-S-oxide + [thioredoxin]-dithiol. In terms of biological role, has an important function as a repair enzyme for proteins that have been inactivated by oxidation. Catalyzes the reversible oxidation-reduction of methionine sulfoxide in proteins to methionine. In Serratia proteamaculans (strain 568), this protein is Peptide methionine sulfoxide reductase MsrA.